A 511-amino-acid polypeptide reads, in one-letter code: Maturase K (511 aa).

This sequence belongs to the intron maturase 2 family. MatK subfamily.

The protein localises to the plastid. It localises to the chloroplast. Functionally, usually encoded in the trnK tRNA gene intron. Probably assists in splicing its own and other chloroplast group II introns. This Poa pratensis (Kentucky bluegrass) protein is Maturase K.